The sequence spans 471 residues: MAGATGVVTDIIGVVLNAKFPEDQTPEIYNALEIRLENGKRLVAEVQQQLGGGVVKAVAMSSTDGMRRGVKAIDTGRPIAVPVGPGTLGRVFDVLGDPIDGEGPVQATEYRPIHRPPPALEDQSTTAQIFETGIKVIDLIAPFTRGGKTGIFGGAGVGKTVVIQELIANVAKEQSGFSVFAGVGERSREGNDLIHEMKEARIDEQTRVFDKTVMVFGQMNEPPGARLRVALTAMTMAEYFRDEGRDVLLFIDNIFRFVQAGSEVSALLGRMPSQVGYQPTLGTEMGELQERITSTKKGSITSMQAVYVPADDYTDPAPATVFSHLDATITLERSIAAKGIYPAVDPLASTSRILDPNIVGAEHYRVAREVQRVLQRYKDLQDIIAILGVEELSDDDKLTVARARKIERFFSQPFTVAQQFTGRPGKYVPIAETVKSFARLLAGEVDHIPEQFFLLQGGLDDVIQAYEASRR.

153 to 160 (GGAGVGKT) serves as a coordination point for ATP.

This sequence belongs to the ATPase alpha/beta chains family. In terms of assembly, F-type ATPases have 2 components, CF(1) - the catalytic core - and CF(0) - the membrane proton channel. CF(1) has five subunits: alpha(3), beta(3), gamma(1), delta(1), epsilon(1). CF(0) has four main subunits: a(1), b(1), b'(1) and c(9-12).

It localises to the cell membrane. It carries out the reaction ATP + H2O + 4 H(+)(in) = ADP + phosphate + 5 H(+)(out). In terms of biological role, produces ATP from ADP in the presence of a proton gradient across the membrane. The catalytic sites are hosted primarily by the beta subunits. This Roseiflexus sp. (strain RS-1) protein is ATP synthase subunit beta.